A 2059-amino-acid polypeptide reads, in one-letter code: Desmoplakin-A (2059 aa).

Residues 1-11 are compositionally biased toward polar residues; the sequence is MSLSGSQTRLH. The interval 1-25 is disordered; sequence MSLSGSQTRLHQISRRSSSRPDLTA. Coiled coils occupy residues 320 to 354 and 397 to 453; these read IPQK…LLKN and FKEA…VQTL. The disordered stretch occupies residues 665-690; the sequence is EVSSGKTATGVSSGKTATGVSSGKTS. Residues 671–690 are compositionally biased toward low complexity; the sequence is TATGVSSGKTATGVSSGKTS. 2 coiled-coil regions span residues 1062 to 1229 and 1261 to 1383; these read MEEL…AELE and LQQD…LQQR. Plectin repeat units follow at residues 1450–1488, 1489–1526, 1564–1602, 1666–1694, 1847–1885, and 1923–1961; these read YLGG…TLEL, LEAQ…KDKL, LLEA…NEIL, IVDP…FLEL, LLEA…SVKL, and FLEF…AQKL. Residues 2008–2059 form a disordered region; the sequence is KGISSPYNVSSGPSSRSGSRAGSRTGSRSGSRRGSVDYSSSSVSYTFFSSAS. Residues 2011–2059 show a composition bias toward low complexity; sequence SSPYNVSSGPSSRSGSRAGSRTGSRSGSRRGSVDYSSSSVSYTFFSSAS.

This sequence belongs to the plakin or cytolinker family.

It localises to the cell junction. The protein resides in the desmosome. The protein localises to the cell membrane. Involved in the organization of desmosome cell-cell junctions. Of particular importance in cell adhesion in the skin and during cardiac development. May also play a role in the regulation of Wnt, TGF-beta and Hippo signaling pathways. The protein is Desmoplakin-A of Danio rerio (Zebrafish).